Consider the following 131-residue polypeptide: MKKTGIINSEVSAVVANMGHMDWLSIGDAGMPVPFGTKKIDLAVDKELPSFMDVLNNVLKEMKVQKIYLAEEIKDQNPAQLENIKKALPDVEVAFMPHSELKKSLTKTHAFIRTGEMTPYSNIILESGVTF.

His-20 functions as the Proton donor in the catalytic mechanism. Substrate-binding positions include Asp-28, His-98, and 120–122 (YSN).

This sequence belongs to the RbsD / FucU family. RbsD subfamily. Homodecamer.

The protein localises to the cytoplasm. The catalysed reaction is beta-D-ribopyranose = beta-D-ribofuranose. The protein operates within carbohydrate metabolism; D-ribose degradation; D-ribose 5-phosphate from beta-D-ribopyranose: step 1/2. In terms of biological role, catalyzes the interconversion of beta-pyran and beta-furan forms of D-ribose. The chain is D-ribose pyranase from Limosilactobacillus reuteri (strain DSM 20016) (Lactobacillus reuteri).